A 543-amino-acid chain; its full sequence is MFLKFKNIFFIVLTLSIVFNGLIVNSKNIHINNKNNNNNNNNKDLSSSESGSSSDINPYISQYNSERETLVNQENQIKLGSNTPFNSKEQQANTIFLNILQNEELSFSNNDPSGVNFFIEKQIIENESTIFKIIQNMPKGSALHVHQDSSATYDYLISVGSYLPNCYIYLTYDVNDANNGTFHFYDSQPTDSNWKLLSTIREGVSNVESFDQQLLDSLTLIGQDYGDYVSLWRKFDGIFGRVNGLVTYLPIATGYMEHLFQQMIQDGVQHIEVRKCFGDFYDLTGKIYDDYWFVQTMEELVLTTRQKYNMSEFALKIIGCNGRHNNQSVVYDAMVMSLDLRNKYPSTFVGYDLVGPEDEGYPLIYFIEQFAEIKKLGYQYQYPLDYYFHAGETILYNNTNLYDAILLNTKRIGHGIQLPKHPLLMDLVLKNDIGIEICPISNQILQYVSDMRAHPGLDLLNRGLPVTISPDDPAIFNYGGLSYDFFELTYSWGLNLQQLKQLAINSINHSNTFNQSEYNLLYNAWEVKWFNFIDYIINTYSNI.

Positions 1 to 26 (MFLKFKNIFFIVLTLSIVFNGLIVNS) are cleaved as a signal peptide. Positions 31–54 (INNKNNNNNNNNKDLSSSESGSSS) are enriched in low complexity. Residues 31-58 (INNKNNNNNNNNKDLSSSESGSSSDINP) are disordered. Asn126 carries an N-linked (GlcNAc...) asparagine glycan. His144 and His146 together coordinate Zn(2+). N-linked (GlcNAc...) asparagine glycosylation is present at Asn179. Substrate is bound at residue 232-239 (WRKFDGIF). N-linked (GlcNAc...) asparagine glycosylation is found at Asn309 and Asn326. Position 355 (Gly355) interacts with substrate. His389 is a Zn(2+) binding site. The Proton donor role is filled by Glu392. The N-linked (GlcNAc...) asparagine glycan is linked to Asn397. Residue His414 is the Proton acceptor of the active site. Position 471 (Asp471) interacts with Zn(2+). Position 472 (Asp472) interacts with substrate. Asn508 and Asn514 each carry an N-linked (GlcNAc...) asparagine glycan.

This sequence belongs to the metallo-dependent hydrolases superfamily. Adenosine and AMP deaminases family. ADGF subfamily. Zn(2+) serves as cofactor.

The protein localises to the secreted. It carries out the reaction adenosine + H2O + H(+) = inosine + NH4(+). Functionally, adenosine deaminase that may contribute to the degradation of extracellular adenosine, a signaling molecule that controls a variety of cellular responses. May play a role in the regulation of cell proliferation. This chain is Adenosine deaminase 2, found in Dictyostelium discoideum (Social amoeba).